The sequence spans 468 residues: ATP synthase subunit beta (468 aa).

155-162 (GGAGVGKT) serves as a coordination point for ATP.

This sequence belongs to the ATPase alpha/beta chains family. As to quaternary structure, F-type ATPases have 2 components, CF(1) - the catalytic core - and CF(0) - the membrane proton channel. CF(1) has five subunits: alpha(3), beta(3), gamma(1), delta(1), epsilon(1). CF(0) has three main subunits: a(1), b(2) and c(9-12). The alpha and beta chains form an alternating ring which encloses part of the gamma chain. CF(1) is attached to CF(0) by a central stalk formed by the gamma and epsilon chains, while a peripheral stalk is formed by the delta and b chains.

It is found in the cell membrane. The enzyme catalyses ATP + H2O + 4 H(+)(in) = ADP + phosphate + 5 H(+)(out). In terms of biological role, produces ATP from ADP in the presence of a proton gradient across the membrane. The catalytic sites are hosted primarily by the beta subunits. This is ATP synthase subunit beta from Streptococcus sanguinis (strain SK36).